Consider the following 1188-residue polypeptide: Oxysterol-binding protein homolog 1 (1188 aa).

3 ANK repeats span residues 51–80 (VLHL…STTN), 96–125 (NGNT…INDC), and 196–225 (TGDT…DPFK). A PH domain is found at 330–379 (MSSCSLHLDSSEKLKFEIIGGNNGVIRWHLKGNHPIETNRWVWAIQGAIR). Position 394 is a phosphoserine (Ser-394). 2 disordered regions span residues 415-546 (ATSK…GDED) and 661-692 (QKKL…QEST). Residues 424-433 (PHLSKSTLTQ) are compositionally biased toward polar residues. Residues 443-462 (TNNNNNKSNNDYDDNNNNNN) are compositionally biased toward low complexity. The segment covering 463 to 473 (NDDDDYDDDDE) has biased composition (acidic residues). Ser-490 and Ser-500 each carry phosphoserine. Residues 514 to 529 (PSDDEGYSEDDSDDDG) show a composition bias toward acidic residues. 3 positions are modified to phosphoserine: Ser-678, Ser-683, and Ser-691. Residues Thr-692 and Thr-694 each carry the phosphothreonine modification. Residues Ser-708 and Ser-712 each carry the phosphoserine modification. An FFAT motif is present at residues 716–722 (EFFDAEE). Residues 721–755 (EEAASDKKANDSEDLTTNKETPANAKPQEEAPEDE) are disordered. An OSBP-related domain (ORD) region spans residues 800 to 1174 (LWSVLKSMVG…YWKFNGEYWN (375 aa)). Asp-834 and Lys-962 together coordinate ergosterol.

It belongs to the OSBP family. As to quaternary structure, interacts with NVJ1. Interacts with the AAA ATPase AFG2; regulates OSH1 membrane association. AFG2 is required for membrane dissociation of OSH1. Interacts with SCS2.

It localises to the golgi apparatus membrane. The protein resides in the nucleus outer membrane. Its subcellular location is the endoplasmic reticulum membrane. The protein localises to the vacuole membrane. Lipid transport protein (LTP) involved in non-vesicular transfer of lipids between membranes. Functions in phosphoinositide-coupled directional transport of various lipids by carrying the lipid molecule in a hydrophobic pocket and transferring it between membranes through the cytosol. Involved in maintenance of intracellular sterol distribution and homeostasis. Involved in non-vesicular transport of ergosterol and PI(4)P at the NVJ. Binds sterol and PI4P in a mutually exclusive manner. May be involved in formation of PMN vesicles by altering the membrane lipid composition. The chain is Oxysterol-binding protein homolog 1 from Saccharomyces cerevisiae (strain ATCC 204508 / S288c) (Baker's yeast).